The primary structure comprises 447 residues: NADH peroxidase (447 aa).

FAD contacts are provided by residues 7–11 (GSSHG), Glu-32, Cys-42, 110–113 (SPGA), and Arg-132. His-10 functions as the Proton acceptor in the catalytic mechanism. The Redox-active role is filled by Cys-42. Cys-42 carries the cysteine sulfenic acid (-SOH) modification. NAD(+)-binding residues include Ile-160, Asp-179, Tyr-188, and Gly-243. Asp-281 is an FAD binding site. NAD(+) is bound at residue Ala-297. Ala-299 contributes to the FAD binding site. Gly-328 is an NAD(+) binding site.

Belongs to the class-III pyridine nucleotide-disulfide oxidoreductase family. As to quaternary structure, homotetramer. FAD is required as a cofactor.

It catalyses the reaction H2O2 + NADH + H(+) = NAD(+) + 2 H2O. In terms of biological role, peroxidase whose active site is a redox-active cysteine-sulfenic acid. The protein is NADH peroxidase (npr) of Enterococcus faecalis (strain ATCC 700802 / V583).